Reading from the N-terminus, the 354-residue chain is Rhodopsin (354 aa).

Residues Met-1–Ala-36 lie on the Extracellular side of the membrane. 2 N-linked (GlcNAc...) asparagine glycosylation sites follow: Asn-2 and Asn-15. The helical transmembrane segment at Tyr-37–Val-61 threads the bilayer. At Thr-62–Asn-73 the chain is on the cytoplasmic side. The helical transmembrane segment at Tyr-74–Tyr-96 threads the bilayer. Residues Thr-97–Cys-110 lie on the Extracellular side of the membrane. An intrachain disulfide couples Cys-110 to Cys-187. A helical transmembrane segment spans residues Asn-111–Ile-133. A 'Ionic lock' involved in activated form stabilization motif is present at residues Glu-134–Trp-136. Residues Glu-134–His-152 lie on the Cytoplasmic side of the membrane. The helical transmembrane segment at Ala-153–Val-173 threads the bilayer. Residues Gly-174–Ser-202 lie on the Extracellular side of the membrane. N-linked (GlcNAc...) asparagine glycosylation is present at Asn-200. Residues Phe-203–Gly-224 form a helical membrane-spanning segment. The Cytoplasmic segment spans residues Arg-225–Arg-252. A helical membrane pass occupies residues Met-253–Tyr-274. The Extracellular segment spans residues Ile-275–Val-286. The helical transmembrane segment at Phe-287–Cys-308 threads the bilayer. Lys-296 is subject to N6-(retinylidene)lysine. Residues Met-309 to Ala-354 are Cytoplasmic-facing. The disordered stretch occupies residues Gly-333–Ala-354. Positions Ala-334–Ala-354 are enriched in low complexity.

Belongs to the G-protein coupled receptor 1 family. Opsin subfamily. In terms of processing, phosphorylated on some or all of the serine and threonine residues present in the C-terminal region. Contains one covalently linked retinal chromophore. As to expression, retinal rod photoreceptor cells, predominantly in the outer segments (at protein level). Retinal rod photoreceptor cells.

It localises to the membrane. The protein resides in the cell projection. Its subcellular location is the cilium. It is found in the photoreceptor outer segment. Functionally, photoreceptor required for image-forming vision at low light intensity. While most salt water fish species use retinal as chromophore, most freshwater fish use 3-dehydroretinal, or a mixture of retinal and 3-dehydroretinal. Light-induced isomerization of 11-cis to all-trans retinal triggers a conformational change that activates signaling via G-proteins. Subsequent receptor phosphorylation mediates displacement of the bound G-protein alpha subunit by arrestin and terminates signaling. The sequence is that of Rhodopsin (rho) from Danio rerio (Zebrafish).